Reading from the N-terminus, the 265-residue chain is Polyglutamine-binding protein 1 (265 aa).

One can recognise a WW domain in the interval 46-80; sequence EGLPPSWYKVFDPSCGLPYYWNADTDLVSWLSPHD. Ser94 bears the Phosphoserine mark. The interval 94–265 is disordered; it reads SSNADAEEKL…AEASRTKQQD (172 aa). Residues 99 to 175 show a composition bias toward basic and acidic residues; it reads AEEKLDRSHD…DKADREEGKE (77 aa). A run of 15 repeats spans residues 104-110, 111-117, 118-124, 125-131, 132-138, 139-140, 141-142, 143-144, 150-151, 152-153, 154-155, 156-157, 158-159, 160-161, and 162-163. The tract at residues 104 to 138 is 5 X 7 AA approximate tandem repeats of D-R-[SG]-H-D-K-S; sequence DRSHDKSDRGHDKSDRSHEKPDRGHDKSDRGHDKS. A 3 X 2 AA tandem repeats of [DE]-R region spans residues 139-144; it reads DRDRER. The interval 150–163 is 7 X 2 AA tandem repeats of [DE]-R; it reads DRERERDRERDRDR. Residues 245–255 are important for interaction with TXNL4A; it reads YPSPGAVLRAN. Ser247 is subject to Phosphoserine.

As to quaternary structure, interacts with POU3F2/Brn-2, ATXN1, TXNL4A, HTT and AR. Interaction with ATXN1 correlates positively with the length of the polyglutamine tract. Interacts with RNA polymerase II large subunit in a phosphorylation-dependent manner. Forms a ternary complex with ATXN1 mutant and phosphorylated RNA polymerase II. Interacts (via C-terminus) with TXNL4A and CD2BP2. Interacts (via WW domain) with ATN1 and SF3B1, and may interact with additional splice factors. Interacts (via WW domain) with WBP11; Leading to reduce interaction between PQBP1 and TXNL4A. Interacts with CAPRIN1. Interacts with DDX1. Interacts with SFPQ. Interacts with KHSRP.

The protein localises to the nucleus. Its subcellular location is the nucleus speckle. It is found in the cytoplasmic granule. Intrinsically disordered protein that acts as a scaffold, and which is involved in different processes, such as pre-mRNA splicing, transcription regulation, innate immunity and neuron development. Interacts with splicing-related factors via the intrinsically disordered region and regulates alternative splicing of target pre-mRNA species. May suppress the ability of POU3F2 to transactivate the DRD1 gene in a POU3F2 dependent manner. Can activate transcription directly or via association with the transcription machinery. May be involved in ATXN1 mutant-induced cell death. The interaction with ATXN1 mutant reduces levels of phosphorylated RNA polymerase II large subunit. Involved in the assembly of cytoplasmic stress granule, possibly by participating in the transport of neuronal RNA granules. Also acts as an innate immune sensor of infection by retroviruses, by detecting the presence of reverse-transcribed DNA in the cytosol. Directly binds retroviral reverse-transcribed DNA in the cytosol and interacts with CGAS, leading to activate the cGAS-STING signaling pathway, triggering type-I interferon production. The polypeptide is Polyglutamine-binding protein 1 (PQBP1) (Pongo pygmaeus (Bornean orangutan)).